The following is a 611-amino-acid chain: Probable methyltransferase PMT1 (611 aa).

Residues 1–11 (MRGRSEGGKKK) lie on the Cytoplasmic side of the membrane. Residues 12 to 32 (PVIVLLCVASVVLVFVYLFFG) traverse the membrane as a helical; Signal-anchor for type II membrane protein segment. Over 33-611 (SSNHKAIEYG…LTSESLRDLE (579 aa)) the chain is Lumenal. An N-linked (GlcNAc...) asparagine glycan is attached at N345.

Belongs to the methyltransferase superfamily.

The protein resides in the golgi apparatus membrane. The polypeptide is Probable methyltransferase PMT1 (Arabidopsis thaliana (Mouse-ear cress)).